Here is a 331-residue protein sequence, read N- to C-terminus: DNA polymerase III subunit delta (331 aa).

The protein belongs to the DNA polymerase HolA subunit family. As to quaternary structure, DNA polymerase III contains a core (composed of alpha, epsilon and theta chains) that associates with a tau subunit. This core dimerizes to form the POLIII' complex. PolIII' associates with the gamma complex (composed of gamma, delta, delta', psi and chi chains) and with the beta chain to form the complete DNA polymerase III complex.

It catalyses the reaction DNA(n) + a 2'-deoxyribonucleoside 5'-triphosphate = DNA(n+1) + diphosphate. DNA polymerase III is a complex, multichain enzyme responsible for most of the replicative synthesis in bacteria. This DNA polymerase also exhibits 3' to 5' exonuclease activity. The delta subunit seems to interact with the gamma subunit to transfer the beta subunit on the DNA. This is DNA polymerase III subunit delta (holA) from Buchnera aphidicola subsp. Acyrthosiphon pisum (strain APS) (Acyrthosiphon pisum symbiotic bacterium).